Here is a 66-residue protein sequence, read N- to C-terminus: Photosystem II reaction center protein H (66 aa).

A helical membrane pass occupies residues 27–47 (GAVPIMTVIGLLLLVFLVILL).

It belongs to the PsbH family. In terms of assembly, PSII is composed of 1 copy each of membrane proteins PsbA, PsbB, PsbC, PsbD, PsbE, PsbF, PsbH, PsbI, PsbJ, PsbK, PsbL, PsbM, PsbT, PsbX, PsbY, Psb30/Ycf12, peripheral proteins PsbO, CyanoQ (PsbQ), PsbU, PsbV and a large number of cofactors. It forms dimeric complexes.

It is found in the cellular thylakoid membrane. One of the components of the core complex of photosystem II (PSII), required for its stability and/or assembly. PSII is a light-driven water:plastoquinone oxidoreductase that uses light energy to abstract electrons from H(2)O, generating O(2) and a proton gradient subsequently used for ATP formation. It consists of a core antenna complex that captures photons, and an electron transfer chain that converts photonic excitation into a charge separation. This is Photosystem II reaction center protein H from Prochlorococcus marinus (strain MIT 9515).